The primary structure comprises 1183 residues: Atrophin-1 (1183 aa).

Disordered regions lie at residues M1–S603, S617–N760, and L780–P855. The Nuclear localization signal signature appears at R16–R32. Basic and acidic residues predominate over residues K17–S29. At S34 the chain carries Phosphoserine. Residues G45 to S63 are compositionally biased toward basic and acidic residues. Residues S77, S79, S100, S102, and S106 each carry the phosphoserine modification. Positions L107–N127 are enriched in basic and acidic residues. The span at R128–S151 shows a compositional bias: polar residues. Composition is skewed to pro residues over residues P157–S173 and G207–Q218. Positions I261–P272 are enriched in low complexity. The segment covering P344 to R373 has biased composition (pro residues). The span at S377 to S400 shows a compositional bias: low complexity. A compositionally biased stretch (polar residues) spans S415–W436. Residues H510–P560 form an involved in binding BAIAP2 region. Over residues S562 to S584 the composition is skewed to low complexity. S625 bears the Phosphoserine mark. The residue at position 634 (K634) is an N6-acetyllysine. T646 is modified (phosphothreonine). S654 is subject to Phosphoserine. T662 is subject to Phosphothreonine. Composition is skewed to pro residues over residues L701–G711 and S732–K745. S732 is subject to Phosphoserine; by MAPK8. A phosphoserine mark is found at S739 and S741. Basic and acidic residues predominate over residues K788–V832. Residues D872–V887 form a required for interaction with FAT1 region. The residue at position 889 (S889) is a Phosphoserine. Positions P921–K940 are disordered. Over residues A922–K940 the composition is skewed to basic and acidic residues. A Nuclear export signal motif is present at residues A1026 to R1034. R1108 bears the Asymmetric dimethylarginine mark. K1176 participates in a covalent cross-link: Glycyl lysine isopeptide (Lys-Gly) (interchain with G-Cter in SUMO2).

As to quaternary structure, interacts with NR2E1; the interaction represses the transcriptional activity of NR2E1. Interact (via its N-terminus) with FAT1 (via a C-terminal domain). Interacts with BAIAP2, WWP1, WWP2, WWP3 and RERE. Interacts (via its N-terminus) with MTG8; the interaction enhances transcriptional repression of MTG8. Interacts with PQBP1. Phosphorylated in vitro by MAPK8/JNK1 on Ser-732. Predominant neuronal expression, Expressed in most brain regions including striatum, hippocampus, cerebral cortex, diencephalon, brain stem and cerebellum. Highest levels in cerebellum. Also highly expressed in kidney and testis, low expression in skeletal muscle and heart.

The protein localises to the nucleus. It is found in the cytoplasm. The protein resides in the perinuclear region. Its subcellular location is the cell junction. Functionally, transcriptional corepressor. Recruits NR2E1 to repress transcription. Promotes vascular smooth cell (VSMC) migration and orientation. Corepressor of MTG8 transcriptional repression. Has some intrinsic repression activity. This is Atrophin-1 (Atn1) from Rattus norvegicus (Rat).